Here is a 2225-residue protein sequence, read N- to C-terminus: Multifunctional protein pyr1-3 (2225 aa).

Methionine 1 is subject to N-acetylmethionine. The interval 40–390 (MVGYNESISD…NVCGEQQHKS (351 aa)) is GATase (Glutamine amidotransferase). Positions 51, 245, and 247 each coordinate L-glutamine. Residues 196 to 388 (KVIVLDCGIK…VDNVCGEQQH (193 aa)) form the Glutamine amidotransferase type-1 domain. Residue cysteine 275 is the Nucleophile; for GATase activity of the active site. L-glutamine-binding residues include glutamine 279, asparagine 317, glycine 319, and phenylalanine 320. Residues histidine 361 and glutamate 363 each act as for GATase activity in the active site. The interval 391-405 (PMNKSKIIDCPKGIN) is linker. The CPSase A stretch occupies residues 406-948 (KVLILGSGGL…TNDVNINEKS (543 aa)). The interval 406–1461 (KVLILGSGGL…MKGPMPIENV (1056 aa)) is CPSase (Carbamoyl-phosphate synthase). 11 residues coordinate ATP: arginine 526, arginine 566, glycine 572, glycine 573, lysine 603, glutamate 610, glycine 636, isoleucine 637, histidine 638, glutamine 679, and glutamate 693. 2 consecutive ATP-grasp domains span residues 530-722 (AEKL…KVAL) and 1069-1260 (SRLL…KIII). Mg(2+) is bound by residues glutamine 679, glutamate 693, and asparagine 695. Residues glutamine 679, glutamate 693, and asparagine 695 each coordinate Mn(2+). Residues 949–1461 (YITLGSGSYR…MKGPMPIENV (513 aa)) form a CPSase B region. Positions 1105, 1144, 1146, 1151, 1176, 1177, 1178, 1179, 1219, and 1231 each coordinate ATP. Mg(2+)-binding residues include glutamine 1219, glutamate 1231, and asparagine 1233. Residues glutamine 1219, glutamate 1231, and asparagine 1233 each coordinate Mn(2+). The MGS-like domain occupies 1324-1470 (FKAPEKNVLL…VDWRTSNKII (147 aa)). A DHOase (dihydroorotase) region spans residues 1463-1797 (WRTSNKIIRL…VRGKVVKVVL (335 aa)). Zn(2+)-binding residues include histidine 1479 and histidine 1481. (S)-dihydroorotate contacts are provided by arginine 1483 and asparagine 1513. Zn(2+) is bound by residues lysine 1564, histidine 1599, cysteine 1622, histidine 1623, and glutamate 1646. Lysine 1564 carries the N6-carboxylysine modification. Arginine 1670 contributes to the (S)-dihydroorotate binding site. Aspartate 1695 serves as a coordination point for Zn(2+). Catalysis depends on aspartate 1695, which acts as the For DHOase activity. 2 residues coordinate (S)-dihydroorotate: histidine 1699 and proline 1711. Residues 1798 to 1916 (RGQIAFIDGK…DTLQTAFNIS (119 aa)) form a linker region. Positions 1917 to 2225 (DNSLAGKHIF…LLALVFGAGV (309 aa)) are ATCase (Aspartate transcarbamylase). Residues arginine 1974 and threonine 1975 each coordinate carbamoyl phosphate. Lysine 2002 serves as a coordination point for L-aspartate. Carbamoyl phosphate is bound by residues arginine 2023, histidine 2051, and glutamine 2054. The L-aspartate site is built by arginine 2084 and arginine 2145. 2 residues coordinate carbamoyl phosphate: leucine 2184 and proline 2185.

In the N-terminal section; belongs to the CarA family. This sequence in the 2nd section; belongs to the CarB family. It in the 3rd section; belongs to the metallo-dependent hydrolases superfamily. DHOase family. CAD subfamily. The protein in the C-terminal section; belongs to the aspartate/ornithine carbamoyltransferase superfamily. ATCase family. Homohexamer. Mg(2+) is required as a cofactor. Requires Mn(2+) as cofactor. Zn(2+) serves as cofactor.

The protein localises to the cytoplasm. It catalyses the reaction hydrogencarbonate + L-glutamine + 2 ATP + H2O = carbamoyl phosphate + L-glutamate + 2 ADP + phosphate + 2 H(+). It carries out the reaction L-glutamine + H2O = L-glutamate + NH4(+). The catalysed reaction is hydrogencarbonate + NH4(+) + 2 ATP = carbamoyl phosphate + 2 ADP + phosphate + 2 H(+). The enzyme catalyses carbamoyl phosphate + L-aspartate = N-carbamoyl-L-aspartate + phosphate + H(+). It catalyses the reaction (S)-dihydroorotate + H2O = N-carbamoyl-L-aspartate + H(+). It participates in pyrimidine metabolism; UMP biosynthesis via de novo pathway; (S)-dihydroorotate from bicarbonate: step 1/3. Its pathway is pyrimidine metabolism; UMP biosynthesis via de novo pathway; (S)-dihydroorotate from bicarbonate: step 2/3. It functions in the pathway pyrimidine metabolism; UMP biosynthesis via de novo pathway; (S)-dihydroorotate from bicarbonate: step 3/3. Its activity is regulated as follows. Allosterically regulated and controlled by phosphorylation. 5-phosphoribose 1-diphosphate is an activator while UMP is an inhibitor of the CPSase reaction. Functionally, multifunctional protein that encodes the first 3 enzymatic activities of the de novo pyrimidine pathway: carbamoylphosphate synthetase (CPSase; EC 6.3.5.5), aspartate transcarbamylase (ATCase; EC 2.1.3.2) and dihydroorotase (DHOase; EC 3.5.2.3). The CPSase-function is accomplished in 2 steps, by a glutamine-dependent amidotransferase activity (GATase) that binds and cleaves glutamine to produce ammonia, followed by an ammonium-dependent carbamoyl phosphate synthetase, which reacts with the ammonia, hydrogencarbonate and ATP to form carbamoyl phosphate. The endogenously produced carbamoyl phosphate is sequestered and channeled to the ATCase active site. ATCase then catalyzes the formation of carbamoyl-L-aspartate from L-aspartate and carbamoyl phosphate. In the last step, DHOase catalyzes the cyclization of carbamoyl aspartate to dihydroorotate. This chain is Multifunctional protein pyr1-3 (pyr1-3), found in Dictyostelium discoideum (Social amoeba).